The primary structure comprises 126 residues: Aspartate 1-decarboxylase (126 aa).

The Schiff-base intermediate with substrate; via pyruvic acid role is filled by Ser25. Ser25 is modified (pyruvic acid (Ser)). Substrate is bound at residue Thr57. The Proton donor role is filled by Tyr58. Residue 73–75 (GGA) participates in substrate binding.

This sequence belongs to the PanD family. In terms of assembly, heterooctamer of four alpha and four beta subunits. Requires pyruvate as cofactor. In terms of processing, is synthesized initially as an inactive proenzyme, which is activated by self-cleavage at a specific serine bond to produce a beta-subunit with a hydroxyl group at its C-terminus and an alpha-subunit with a pyruvoyl group at its N-terminus.

It is found in the cytoplasm. The enzyme catalyses L-aspartate + H(+) = beta-alanine + CO2. It participates in cofactor biosynthesis; (R)-pantothenate biosynthesis; beta-alanine from L-aspartate: step 1/1. In terms of biological role, catalyzes the pyruvoyl-dependent decarboxylation of aspartate to produce beta-alanine. The polypeptide is Aspartate 1-decarboxylase (Xanthomonas campestris pv. campestris (strain B100)).